Reading from the N-terminus, the 545-residue chain is Intercellular adhesion molecule 1 (545 aa).

A signal peptide spans methionine 1–alanine 27. The Extracellular portion of the chain corresponds to glutamine 28 to asparagine 492. 2 Ig-like C2-type domains span residues glycine 41–alanine 103 and glycine 128–arginine 193. Residue asparagine 47 is glycosylated (N-linked (GlcNAc...) asparagine). 3 cysteine pairs are disulfide-bonded: cysteine 48/cysteine 92, cysteine 52/cysteine 96, and cysteine 135/cysteine 186. Residue asparagine 154 is glycosylated (N-linked (GlcNAc...) asparagine). A Cell attachment site motif is present at residues arginine 177–aspartate 179. Asparagine 183 and asparagine 202 each carry an N-linked (GlcNAc...) asparagine glycan. Residues glycine 230 to glutamine 297 enclose the Ig-like C2-type 3 domain. A disulfide bridge connects residues cysteine 237 and cysteine 290. Residues asparagine 309, asparagine 344, asparagine 396, asparagine 417, asparagine 439, and asparagine 464 are each glycosylated (N-linked (GlcNAc...) asparagine). The region spanning glycine 325–aspartate 389 is the Ig-like C2-type 4 domain. Cysteine 332 and cysteine 382 form a disulfide bridge. The disordered stretch occupies residues leucine 343 to isoleucine 365. Disulfide bonds link cysteine 414/cysteine 430, cysteine 430/cysteine 469, and cysteine 442/cysteine 469. Residues glycine 423–glycine 476 form the Ig-like C2-type 5 domain. Residues threonine 493–tyrosine 517 traverse the membrane as a helical segment. At tyrosine 518–proline 545 the chain is on the cytoplasmic side.

Belongs to the immunoglobulin superfamily. ICAM family. In terms of assembly, homodimer. Interacts with MUC1 and promotes cell aggregation in epithelial cells. Interacts with ARHGEF26/SGEF. Interacts (on T cell side) with CD81, CD247 and CD9 at immunological synapses between antigen-presenting cells and T cells. Post-translationally, monoubiquitinated, which is promoted by MARCH9 and leads to endocytosis.

It is found in the membrane. Functionally, ICAM proteins are ligands for the leukocyte adhesion protein LFA-1 (integrin alpha-L/beta-2). During leukocyte trans-endothelial migration, ICAM1 engagement promotes the assembly of endothelial apical cups through ARHGEF26/SGEF and RHOG activation. This Rattus norvegicus (Rat) protein is Intercellular adhesion molecule 1 (Icam1).